The sequence spans 597 residues: Lysine--tRNA ligase (597 aa).

Mg(2+) is bound by residues E501 and E508.

Belongs to the class-II aminoacyl-tRNA synthetase family. In terms of assembly, homodimer. Mg(2+) is required as a cofactor.

Its subcellular location is the cytoplasm. The catalysed reaction is tRNA(Lys) + L-lysine + ATP = L-lysyl-tRNA(Lys) + AMP + diphosphate. The sequence is that of Lysine--tRNA ligase (lysS) from Aquifex aeolicus (strain VF5).